We begin with the raw amino-acid sequence, 619 residues long: DBH-like monooxygenase protein 2 (619 aa).

A signal peptide spans M1–G21. At K22–R594 the chain is on the extracellular side. The DOMON domain maps to R40 to G156. Y209 is an active-site residue. 2 disulfides stabilise this stretch: C211–C261 and C248–C271. Cu cation-binding residues include H241 and H242. Residue N250 is glycosylated (N-linked (GlcNAc...) asparagine). Positions 309, 390, and 392 each coordinate Cu cation. 2 cysteine pairs are disulfide-bonded: C366–C481 and C444–C466. H390 is an active-site residue. N405 carries an N-linked (GlcNAc...) asparagine glycan. M465 contacts Cu cation. N477 carries an N-linked (GlcNAc...) asparagine glycan. A helical membrane pass occupies residues P595–L615. Residues Q616–V619 lie on the Cytoplasmic side of the membrane.

The protein belongs to the copper type II ascorbate-dependent monooxygenase family. It depends on Cu(2+) as a cofactor. Expressed at low levels in thymus and testis.

The protein resides in the membrane. The chain is DBH-like monooxygenase protein 2 (Moxd2) from Mus musculus (Mouse).